Consider the following 478-residue polypeptide: Solute carrier family 49 member 4 (478 aa).

The tract at residues 1 to 27 (MGSGWSSEEEERQPLLGPGLGPAPGAT) is disordered. Topologically, residues 1–51 (MGSGWSSEEEERQPLLGPGLGPAPGATRRGREAAAVLPAAGPSPGRVYGRR) are cytoplasmic. The Di-leucine motif; mediates lysosomal localization motif lies at 15–16 (LL). Residues 52–72 (WLVLLLFSLLAFAQGLVWNTW) traverse the membrane as a helical segment. Residues 73–89 (GPIQNSARQAYSFTGWD) lie on the Lumenal side of the membrane. A helical membrane pass occupies residues 90–110 (IALLVLWGPIGFLPCFAFMWL). The Cytoplasmic segment spans residues 111–117 (LDKRGLR). A helical membrane pass occupies residues 118–138 (ITVLLTSFLMVLGTGLRCIPV). The Lumenal portion of the chain corresponds to 139 to 152 (SDLTLKKRLIHGGQ). The chain crosses the membrane as a helical span at residues 153–173 (ILNGLAGPTVMNAAPFLSTTW). The Cytoplasmic portion of the chain corresponds to 174–184 (FSADERATATA). A helical transmembrane segment spans residues 185-205 (IASMLSYLGGACAFLVGPLVV). Residues 206 to 229 (PAPNGTAPLLTAESSRDHIKDRIE) are Lumenal-facing. N-linked (GlcNAc...) asparagine glycosylation is present at Asn209. A helical membrane pass occupies residues 230-250 (TVLYAEFGVVCLIFSATLAYF). Residues 251–281 (PPRPPLPPSVAAASQRLSYRRSFCRLLSNLR) lie on the Cytoplasmic side of the membrane. Residues 282–302 (FLMIALAYAIPLGVFAGWSGV) form a helical membrane-spanning segment. Topologically, residues 303-314 (LDLILTPVHVSQ) are lumenal. A helical transmembrane segment spans residues 315 to 335 (VDAGWIGFWSIVGGCVVGIAM). At 336–347 (ARFADFIRGMLK) the chain is on the cytoplasmic side. A helical transmembrane segment spans residues 348-368 (LILLLLFSGATLSSTWFTLTC). Residues 369-384 (LNSVTHLPLTTVTLYA) lie on the Lumenal side of the membrane. Residues 385–405 (SCILLGVFLNSSVPIFFELFV) form a helical membrane-spanning segment. The Cytoplasmic portion of the chain corresponds to 406 to 414 (ETVYPVPEG). A helical transmembrane segment spans residues 415 to 435 (ITCGVVTFLSNMFMGVLLFFV). Topologically, residues 436–442 (TFYHTEL) are lumenal. The helical transmembrane segment at 443–463 (SWFNWCLPGSCLLSLLLILCF) threads the bilayer. The Cytoplasmic segment spans residues 464 to 478 (RESYDRLYLDVVVSV).

The protein belongs to the major facilitator superfamily. Post-translationally, cleaved in lysosomes by cathepsin L between Leu-214 and Ala-261, generating a N-glycosylated N-terminal and a non-glycosylated C-terminal fragment.

It localises to the lysosome membrane. The catalysed reaction is pyridoxine(out) + n H(+)(out) = pyridoxine(in) + n H(+)(in). Mediates H(+)-dependent pyridoxine transport. This Rattus norvegicus (Rat) protein is Solute carrier family 49 member 4 (Slc49a4).